Reading from the N-terminus, the 94-residue chain is Acylphosphatase (94 aa).

The Acylphosphatase-like domain occupies Ala7 to Arg94. Catalysis depends on residues Arg22 and Asn40.

Belongs to the acylphosphatase family.

It carries out the reaction an acyl phosphate + H2O = a carboxylate + phosphate + H(+). The polypeptide is Acylphosphatase (acyP) (Sinorhizobium medicae (strain WSM419) (Ensifer medicae)).